The primary structure comprises 999 residues: Probable basic-leucine zipper transcription factor N (999 aa).

Low complexity-rich tracts occupy residues 1 to 79 and 88 to 126; these read MYQS…YQQQ and NNVN…INNN. A disordered region spans residues 1–126; it reads MYQSIPQQGN…NNNNGNINNN (126 aa). 2 coiled-coil regions span residues 148-198 and 232-282; these read QQQQ…MVLM and GIQQ…QQIS. The segment covering 286 to 302 has biased composition (polar residues); it reads ESASPYYSTPIQSNTML. Disordered stretches follow at residues 286–406, 450–533, and 601–620; these read ESAS…SQDQ, QQLH…PTIN, and EKQK…NYRQ. Low complexity predominate over residues 303–347; it reads SIPSSPGIPSSIPQLNNSNNINNNSNNNNNNNNNNNNNNINYNSN. Positions 348 to 406 are enriched in polar residues; the sequence is MASNFISQHSNNGSNTSSPVPQTTYLQNSGGNFNAYNGSNTNSPITPSSYLQPTTSQDQ. Positions 423-451 form a coiled coil; it reads IQQQQKILQQQQQQQLLLQQQIQQQQQQQ. The span at 450 to 517 shows a compositional bias: low complexity; sequence QQLHQPQSPQ…IIQPTTIQPQ (68 aa). The bZIP domain occupies 601–664; the sequence is EKQKTRRRAS…KKLLHENNIL (64 aa). The segment at 602-632 is basic motif; it reads KQKTRRRASQNLASRNYRQRKKQYVNEVEDR. The interval 636 to 643 is leucine-zipper; that stretch reads IVQENERL. Disordered stretches follow at residues 665–711, 779–807, and 870–899; these read KSGG…VVET, QSCP…SPYE, and VNNG…TTTT. Positions 682-692 are enriched in acidic residues; sequence SEDEDEDDFDQ. Residues 921 to 950 are a coiled coil; that stretch reads HLVQLSGLLDKLKENIDHENETLIQTYEKL.

Belongs to the bZIP family.

It is found in the nucleus. Its function is as follows. Probable transcriptional regulator. The sequence is that of Probable basic-leucine zipper transcription factor N (bzpN) from Dictyostelium discoideum (Social amoeba).